Here is a 313-residue protein sequence, read N- to C-terminus: Solute carrier family 35 member E3 (313 aa).

A run of 9 helical transmembrane segments spans residues 17-37 (GLLFNLLVSICIVFLNKWIYV), 40-60 (GFPNMSLTLVHFVVTWLGLYI), 77-97 (LLLLALSFCGFVVFTNLSLQN), 126-143 (FSTRIQLTLIPITLGVIL), 153-173 (FLGMVFAALGVLVTSLYQVWV), 187-206 (LLYYQAPMSSAMLLVAVPFF), 225-245 (LMVLLSGVIAFMVNLSIYWII), 252-272 (TYNMFGHFKFCITLFGGYVLF), and 275-295 (PLSINQALGILCTLFGILAYT).

This sequence belongs to the TPT transporter family. SLC35E subfamily.

The protein resides in the membrane. In terms of biological role, putative transporter. The chain is Solute carrier family 35 member E3 (SLC35E3) from Homo sapiens (Human).